The sequence spans 2126 residues: Phthioceranic/hydroxyphthioceranic acid synthase (2126 aa).

One can recognise a Ketosynthase family 3 (KS3) domain in the interval valine 24–glutamine 447. The Acyl-thioester intermediate; for beta-ketoacyl synthase activity role is filled by cysteine 196. Active-site for beta-ketoacyl synthase activity residues include histidine 331 and histidine 367. Positions proline 449–aspartate 549 are linker domain (LD). Residues arginine 550–glutamate 849 form an acyltransferase (AT) region. Serine 641 (acyl-ester intermediate; for acyltransferase activity) is an active-site residue. The interval serine 909–threonine 1191 is dehydratase (DH). Positions histidine 914–valine 1032 are N-terminal hotdog fold. One can recognise a PKS/mFAS DH domain in the interval histidine 914–lysine 1198. Histidine 947 (proton acceptor; for dehydratase activity) is an active-site residue. The C-terminal hotdog fold stretch occupies residues proline 1051–lysine 1198. Aspartate 1115 (proton donor; for dehydratase activity) is an active-site residue. The segment at lysine 1227–aspartate 1398 is pseudo beta-ketoacyl reductase (PsiKR). Residues serine 1426–isoleucine 1750 are enoylreductase (ER). The segment at glycine 1772–phenylalanine 2019 is beta-ketoacyl reductase (KR). NADP(+) is bound by residues leucine 1780 to leucine 1783, serine 1803 to glutamine 1806, aspartate 1831 to isoleucine 1832, and phenylalanine 1904 to serine 1905. Residues aspartate 2040 to glutamine 2126 form the Carrier domain. O-(pantetheine 4'-phosphoryl)serine is present on serine 2075.

The cofactor is pantetheine 4'-phosphate.

The enzyme catalyses hexadecanoyl-[(hydroxy)phthioceranic acid synthase] + 7 (S)-methylmalonyl-CoA + 14 NADPH + 21 H(+) = C37-phthioceranyl-[(hydroxy)phthioceranic acid synthase] + 7 CO2 + 14 NADP(+) + 7 CoA + 7 H2O. The catalysed reaction is hexadecanoyl-[(hydroxy)phthioceranic acid synthase] + 8 (S)-methylmalonyl-CoA + 16 NADPH + 24 H(+) = C40-phthioceranyl-[(hydroxy)phthioceranic acid synthase] + 8 CO2 + 16 NADP(+) + 8 CoA + 8 H2O. The protein is Phthioceranic/hydroxyphthioceranic acid synthase (pks2) of Mycobacterium bovis (strain BCG / Pasteur 1173P2).